Reading from the N-terminus, the 157-residue chain is Ribosome maturation factor RimP (157 aa).

This sequence belongs to the RimP family.

The protein resides in the cytoplasm. Required for maturation of 30S ribosomal subunits. This is Ribosome maturation factor RimP from Synechococcus sp. (strain JA-3-3Ab) (Cyanobacteria bacterium Yellowstone A-Prime).